The primary structure comprises 1220 residues: DNA-directed RNA polymerase subunit beta' (1220 aa).

The Zn(2+) site is built by Cys61, Cys63, Cys76, and Cys79. Asp450, Asp452, and Asp454 together coordinate Mg(2+). The tract at residues 1197–1220 (QPEVEQEPTPDIPKLDDVAKSFEE) is disordered. Positions 1209–1220 (PKLDDVAKSFEE) are enriched in basic and acidic residues.

The protein belongs to the RNA polymerase beta' chain family. As to quaternary structure, the RNAP catalytic core consists of 2 alpha, 1 beta, 1 beta' and 1 omega subunit. When a sigma factor is associated with the core the holoenzyme is formed, which can initiate transcription. Mg(2+) serves as cofactor. It depends on Zn(2+) as a cofactor.

It carries out the reaction RNA(n) + a ribonucleoside 5'-triphosphate = RNA(n+1) + diphosphate. DNA-dependent RNA polymerase catalyzes the transcription of DNA into RNA using the four ribonucleoside triphosphates as substrates. The protein is DNA-directed RNA polymerase subunit beta' of Leuconostoc citreum (strain KM20).